We begin with the raw amino-acid sequence, 571 residues long: Wee1-like protein kinase 1-A (571 aa).

Positions 1–101 are disordered; it reads MSLQPVPHRL…PDCPGTPPHK (101 aa). Residues 81–98 show a composition bias toward pro residues; it reads PASPPGPAASPPDCPGTP. A Protein kinase domain is found at 224-494; it reads FHELEKIGSG…SMALVKHSVL (271 aa). Residues 230-238 and K253 contribute to the ATP site; that span reads IGSGEFGSV. Catalysis depends on D351, which acts as the Proton acceptor. Mg(2+) is bound by residues N356 and D388. A coiled-coil region spans residues 500–539; sequence KNAEQLRIELNAEKFKNALLQKELKKAQIAKAAAEERALF.

Belongs to the protein kinase superfamily. Ser/Thr protein kinase family. WEE1 subfamily. As to expression, zygotically expressed. Expressed in regions of the embryo that are devoid of mitotic cells, such as the involuting mesoderm.

Its subcellular location is the nucleus. The enzyme catalyses L-tyrosyl-[protein] + ATP = O-phospho-L-tyrosyl-[protein] + ADP + H(+). In terms of biological role, acts as a zygotic negative regulator of entry into mitosis (G2 to M transition) by protecting the nucleus from cytoplasmically activated cyclin B1-complexed cdk1 before the onset of mitosis by mediating phosphorylation of cdk1 on 'Tyr-15'. Specifically phosphorylates and inactivates cyclin B1-complexed cdk1 reaching a maximum during G2 phase and a minimum as cells enter M phase. Phosphorylation of cyclin B1-cdk1 occurs exclusively on 'Tyr-15' and phosphorylation of monomeric cdk1 does not occur. Involved in convergent extension of the paraxial mesoderm during neurulation by inhibiting the cell cycle. The protein is Wee1-like protein kinase 1-A (wee1-a) of Xenopus laevis (African clawed frog).